Here is a 953-residue protein sequence, read N- to C-terminus: Scaffold attachment factor B2 (953 aa).

Positions 1 to 29 are disordered; it reads MAETLPGSGDSGPGTASLGPGVAETGTRR. An N-acetylalanine modification is found at Ala-2. In terms of domain architecture, SAP spans 30–64; the sequence is LSELRVIDLRAELKKRNLDTGGNKSVLMERLKKAV. Ser-54 carries the phosphoserine modification. Residue Lys-65 forms a Glycyl lysine isopeptide (Lys-Gly) (interchain with G-Cter in SUMO1); alternate linkage. Residue Lys-65 forms a Glycyl lysine isopeptide (Lys-Gly) (interchain with G-Cter in SUMO2); alternate linkage. The tract at residues 91–114 is disordered; sequence KGLKMEEEGTEDNGLEDDSRDGQE. Lys-94 participates in a covalent cross-link: Glycyl lysine isopeptide (Lys-Gly) (interchain with G-Cter in SUMO2). The segment covering 98 to 114 has biased composition (acidic residues); the sequence is EGTEDNGLEDDSRDGQE. Ser-109 and Ser-158 each carry phosphoserine. Glycyl lysine isopeptide (Lys-Gly) (interchain with G-Cter in SUMO2) cross-links involve residues Lys-188 and Lys-199. Position 201 is a phosphothreonine (Thr-201). Residue Ser-207 is modified to Phosphoserine. The tract at residues 219–404 is disordered; it reads ILGETCKSEP…KDEKGRVGSG (186 aa). The segment covering 224-233 has biased composition (basic and acidic residues); it reads CKSEPVKEES. Residue Lys-230 forms a Glycyl lysine isopeptide (Lys-Gly) (interchain with G-Cter in SUMO) linkage. Positions 274–285 are enriched in polar residues; it reads SESTAHAQSSKA. A compositionally biased stretch (basic and acidic residues) spans 292–308; sequence VKREPAEQPGDGERTDC. A Glycyl lysine isopeptide (Lys-Gly) (interchain with G-Cter in SUMO) cross-link involves residue Lys-293. Over residues 318 to 329 the composition is skewed to low complexity; sequence EQSSAASELAEA. A compositionally biased stretch (basic and acidic residues) spans 345–358; it reads EARDSKEDGRKFDF. Polar residues predominate over residues 370–382; the sequence is ESSTSEGADQKMS. Residues Lys-380, Lys-385, Lys-388, Lys-391, and Lys-395 each participate in a glycyl lysine isopeptide (Lys-Gly) (interchain with G-Cter in SUMO2) cross-link. The span at 383–400 shows a compositional bias: basic and acidic residues; the sequence is SFKEEKDIKPIIKDEKGR. One can recognise an RRM domain in the interval 407–485; that stretch reads RNLWVSGLSS…RMISVEKAKN (79 aa). Residues Ser-507 and Ser-513 each carry the phosphoserine modification. Residues Lys-517, Lys-524, Lys-525, Lys-541, Lys-542, and Lys-551 each participate in a glycyl lysine isopeptide (Lys-Gly) (interchain with G-Cter in SUMO2) cross-link. Basic and acidic residues predominate over residues 525–551; that stretch reads KEEKIEKKEEKKPEDIKKEEKDQDELK. 2 disordered regions span residues 525–665 and 684–953; these read KEEK…RLQR and RERL…TRRY. A compositionally biased stretch (polar residues) spans 555 to 564; sequence TNRSRVTKSG. The span at 567 to 579 shows a compositional bias: basic and acidic residues; it reads GMERTVVMDKSKG. Residues Lys-578, Lys-586, and Lys-608 each participate in a glycyl lysine isopeptide (Lys-Gly) (interchain with G-Cter in SUMO2) cross-link. Basic and acidic residues-rich tracts occupy residues 590–665 and 684–820; these read RSKE…RLQR and RERL…DSRD. An interaction with SAFB1 region spans residues 600-953; sequence DRKSESKEKR…PPYPHFTRRY (354 aa). Lys-616 is covalently cross-linked (Glycyl lysine isopeptide (Lys-Gly) (interchain with G-Cter in SUMO2); alternate). An N6-acetyllysine; alternate modification is found at Lys-616. A Nuclear localization signal motif is present at residues 713 to 730; sequence RRQQEQLRYEQERRPGRR. A phosphoserine mark is found at Ser-787 and Ser-832. A compositionally biased stretch (basic and acidic residues) spans 843 to 859; that stretch reads GGRDWGEHNQRLEEHQA. The segment covering 881–890 has biased composition (gly residues); that stretch reads GERGLSGPSG. At Ser-886 the chain carries Phosphoserine. Omega-N-methylarginine occurs at positions 897 and 903. Residues 899-927 are compositionally biased toward gly residues; the sequence is GVAGRGGFAQGGHSQGHVVPGGGLEGGGV.

As to quaternary structure, interacts with SAFB/SAFB1 and SCAM1. Interacts with isoform 2 SRPK1 and inhibits its activity. Expressed at high levels in the CNS and at low levels in the liver. Expressed in a wide number of breast cancer cell lines.

Its subcellular location is the cytoplasm. The protein localises to the nucleus. Its function is as follows. Binds to scaffold/matrix attachment region (S/MAR) DNA. Can function as an estrogen receptor corepressor and can also inhibit cell proliferation. This is Scaffold attachment factor B2 (SAFB2) from Homo sapiens (Human).